A 523-amino-acid chain; its full sequence is Probable malate:quinone oxidoreductase 1 (523 aa).

This sequence belongs to the MQO family. FAD is required as a cofactor.

It carries out the reaction (S)-malate + a quinone = a quinol + oxaloacetate. It functions in the pathway carbohydrate metabolism; tricarboxylic acid cycle; oxaloacetate from (S)-malate (quinone route): step 1/1. The protein is Probable malate:quinone oxidoreductase 1 of Pseudomonas aeruginosa (strain ATCC 15692 / DSM 22644 / CIP 104116 / JCM 14847 / LMG 12228 / 1C / PRS 101 / PAO1).